The sequence spans 237 residues: Carbohydrate deacetylase (237 aa).

Mg(2+) contacts are provided by His59 and His125.

It belongs to the YdjC deacetylase family. Mg(2+) is required as a cofactor.

Probably catalyzes the deacetylation of acetylated carbohydrates an important step in the degradation of oligosaccharides. This Halalkalibacterium halodurans (strain ATCC BAA-125 / DSM 18197 / FERM 7344 / JCM 9153 / C-125) (Bacillus halodurans) protein is Carbohydrate deacetylase.